Reading from the N-terminus, the 277-residue chain is NH(3)-dependent NAD(+) synthetase (277 aa).

ATP is bound at residue 36 to 43; the sequence is GLSGGIDS. D42 is a binding site for Mg(2+). R118 serves as a coordination point for deamido-NAD(+). T138 provides a ligand contact to ATP. E143 contributes to the Mg(2+) binding site. Positions 167 and 189 each coordinate ATP.

Belongs to the NAD synthetase family. As to quaternary structure, homodimer.

The catalysed reaction is deamido-NAD(+) + NH4(+) + ATP = AMP + diphosphate + NAD(+) + H(+). Its pathway is cofactor biosynthesis; NAD(+) biosynthesis; NAD(+) from deamido-NAD(+) (ammonia route): step 1/1. Functionally, catalyzes the ATP-dependent amidation of deamido-NAD to form NAD. Uses ammonia as a nitrogen source. This chain is NH(3)-dependent NAD(+) synthetase, found in Chlorobium phaeobacteroides (strain DSM 266 / SMG 266 / 2430).